The chain runs to 275 residues: Dermonecrotic toxin LspiSicTox-betaIE4i (275 aa).

Residues Glu-24 and Asp-26 each contribute to the Mg(2+) site. The active-site Nucleophile is His-40. Cystine bridges form between Cys-44/Cys-50 and Cys-46/Cys-188. Asp-84 contacts Mg(2+).

This sequence belongs to the arthropod phospholipase D family. Class II subfamily. Requires Mg(2+) as cofactor. Expressed by the venom gland.

The protein localises to the secreted. It carries out the reaction an N-(acyl)-sphingosylphosphocholine = an N-(acyl)-sphingosyl-1,3-cyclic phosphate + choline. The enzyme catalyses an N-(acyl)-sphingosylphosphoethanolamine = an N-(acyl)-sphingosyl-1,3-cyclic phosphate + ethanolamine. It catalyses the reaction a 1-acyl-sn-glycero-3-phosphocholine = a 1-acyl-sn-glycero-2,3-cyclic phosphate + choline. The catalysed reaction is a 1-acyl-sn-glycero-3-phosphoethanolamine = a 1-acyl-sn-glycero-2,3-cyclic phosphate + ethanolamine. Functionally, dermonecrotic toxins cleave the phosphodiester linkage between the phosphate and headgroup of certain phospholipids (sphingolipid and lysolipid substrates), forming an alcohol (often choline) and a cyclic phosphate. This toxin acts on sphingomyelin (SM). It may also act on ceramide phosphoethanolamine (CPE), lysophosphatidylcholine (LPC) and lysophosphatidylethanolamine (LPE), but not on lysophosphatidylserine (LPS), and lysophosphatidylglycerol (LPG). It acts by transphosphatidylation, releasing exclusively cyclic phosphate products as second products. Induces dermonecrosis, hemolysis, increased vascular permeability, edema, inflammatory response, and platelet aggregation. The sequence is that of Dermonecrotic toxin LspiSicTox-betaIE4i from Loxosceles spinulosa (Recluse spider).